A 150-amino-acid chain; its full sequence is Small ribosomal subunit protein uS11 (150 aa).

The protein belongs to the universal ribosomal protein uS11 family. Part of the 30S ribosomal subunit. Interacts with proteins S7 and S18. Binds to IF-3.

In terms of biological role, located on the platform of the 30S subunit, it bridges several disparate RNA helices of the 16S rRNA. Forms part of the Shine-Dalgarno cleft in the 70S ribosome. In Pelagibacter ubique (strain HTCC1062), this protein is Small ribosomal subunit protein uS11.